A 356-amino-acid chain; its full sequence is Protein HEXIM1 (356 aa).

Composition is skewed to basic and acidic residues over residues 1 to 11 (MAEPLLTEHQH) and 24 to 47 (VHEE…DSRW). The tract at residues 1–162 (MAEPLLTEHQ…RPSKKKRHWK (162 aa)) is disordered. Over residues 48–58 (QSRASLQSGSR) the composition is skewed to polar residues. The span at 84–93 (SLEKGEKGQN) shows a compositional bias: basic and acidic residues. S98 and S103 each carry phosphoserine. A compositionally biased stretch (basic residues) spans 145-162 (LGKKKHRRRPSKKKRHWK). The basic region; mediates nuclear localization and interaction with 7SK snRNA and NR3C1 stretch occupies residues 147-174 (KKKHRRRPSKKKRHWKPYYKLTWEEKKK). The interaction with P-TEFb stretch occupies residues 199–202 (PYNT). Residues 207 to 247 (MDDHDQEEPDLKTGLYPKRAAAKSDDTSDEDFVEEAGEEDG) form an autoinhibitory acidic region; in absence of 7SK snRNA interacts with the basic region preventing interaction with P-TEFb and modulating subcellular localization region. The disordered stretch occupies residues 210–259 (HDQEEPDLKTGLYPKRAAAKSDDTSDEDFVEEAGEEDGGSDGMGGDGSEF). Residue S230 is modified to Phosphoserine. The residue at position 233 (T233) is a Phosphothreonine. The segment covering 233-248 (TSDEDFVEEAGEEDGG) has biased composition (acidic residues). S234, S249, and S257 each carry phosphoserine. Residues 280–346 (SKQELIKEYL…LTENELHRQQ (67 aa)) are a coiled coil. The mediates interaction with CCNT1 stretch occupies residues 283 to 311 (ELIKEYLELEKCLSRKEDENNRLRLESKR). The interval 307 to 352 (LESKRLGGVDARVRELELELDRLRAENLQLLTENELHRQQERAPLS) is required for inhibition of ESR1-dependent transcription.

It belongs to the HEXIM family. In terms of assembly, homooligomer and heterooligomer with HEXIM2; probably dimeric. Core component of the 7SK RNP complex, at least composed of 7SK RNA, LARP7, MEPCE, HEXIM1 (or HEXIM2) and P-TEFb (composed of CDK9 and CCNT1/cyclin-T1). Interacts with the N-CoR complex through NCOR1. Interacts with ESR1 and NR3C1. May interact with NF-kappa-B through RELA. Interacts with CCNT2; mediates formation of a tripartite complex with KPNA2. Part of the HDP-RNP complex composed of at least HEXIM1, PRKDC, XRCC5, XRCC6, paraspeckle proteins (SFPQ, NONO, PSPC1, RBM14, and MATR3) and NEAT1 non-coding RNA. In terms of tissue distribution, widely expressed with higher expression in heart, skeletal muscle and brain (at protein level).

It localises to the nucleus. The protein resides in the cytoplasm. Its function is as follows. Transcriptional regulator which functions as a general RNA polymerase II transcription inhibitor. Core component of the 7SK RNP complex: in cooperation with 7SK snRNA sequesters P-TEFb in a large inactive 7SK snRNP complex preventing RNA polymerase II phosphorylation and subsequent transcriptional elongation. May also regulate NF-kappa-B, ESR1, NR3C1 and CIITA-dependent transcriptional activity. Plays a role in the regulation of DNA virus-mediated innate immune response by assembling into the HDP-RNP complex, a complex that serves as a platform for IRF3 phosphorylation and subsequent innate immune response activation through the cGAS-STING pathway. This Mus musculus (Mouse) protein is Protein HEXIM1 (Hexim1).